The chain runs to 154 residues: 6,7-dimethyl-8-ribityllumazine synthase (154 aa).

5-amino-6-(D-ribitylamino)uracil is bound by residues Trp-22, 56–58, and 80–82; these read AWE and CVI. 85-86 serves as a coordination point for (2S)-2-hydroxy-3-oxobutyl phosphate; it reads DT. Catalysis depends on His-88, which acts as the Proton donor. Residue Asn-113 coordinates 5-amino-6-(D-ribitylamino)uracil. Position 127 (Arg-127) interacts with (2S)-2-hydroxy-3-oxobutyl phosphate.

Belongs to the DMRL synthase family. In terms of assembly, forms an icosahedral capsid composed of 60 subunits, arranged as a dodecamer of pentamers.

It carries out the reaction (2S)-2-hydroxy-3-oxobutyl phosphate + 5-amino-6-(D-ribitylamino)uracil = 6,7-dimethyl-8-(1-D-ribityl)lumazine + phosphate + 2 H2O + H(+). The protein operates within cofactor biosynthesis; riboflavin biosynthesis; riboflavin from 2-hydroxy-3-oxobutyl phosphate and 5-amino-6-(D-ribitylamino)uracil: step 1/2. Its function is as follows. Catalyzes the formation of 6,7-dimethyl-8-ribityllumazine by condensation of 5-amino-6-(D-ribitylamino)uracil with 3,4-dihydroxy-2-butanone 4-phosphate. This is the penultimate step in the biosynthesis of riboflavin. The sequence is that of 6,7-dimethyl-8-ribityllumazine synthase from Xanthomonas campestris pv. campestris (strain 8004).